The primary structure comprises 975 residues: E3 ubiquitin-protein ligase BRE1A (975 aa).

A disordered region spans residues 1–30 (MSGIGNKRAAGEPGTSMPPEKKAAVEDSGT). The residue at position 21 (Lys-21) is an N6-acetyllysine. Ser-41 carries the phosphoserine modification. Positions 43–90 (TEELDIRTLQTKNRKLAEMLDQRQAIEDELREHIEKLERRQATDDASL) form a coiled coil. Positions 125–155 (KALVVPEPEPDSDSNQERKDDRERGEGQEPA) are disordered. Ser-136 and Ser-138 each carry phosphoserine. The segment covering 139-151 (NQERKDDRERGEG) has biased composition (basic and acidic residues). Coiled coils occupy residues 168–375 (EEME…EQVV) and 429–898 (SLHK…TTKK). N6-acetyllysine occurs at positions 348 and 510. The segment at 507 to 622 (DLNKTRLRSG…GKHDDGRKKE (116 aa)) is disordered. At Ser-522 the chain carries Phosphoserine. A compositionally biased stretch (basic and acidic residues) spans 527–540 (EDPKDEPAELKPDS). The span at 543–552 (LSSQSSASKA) shows a compositional bias: low complexity. Residues 558–622 (NEIKSKRDEE…GKHDDGRKKE (65 aa)) are compositionally biased toward basic and acidic residues. Residue Ser-562 is modified to Phosphoserine. An RING-type zinc finger spans residues 922–961 (CPCCNMRKKDAVLTKCFHVFCFECVKTRYDTRQRKCPKCN).

The protein belongs to the BRE1 family. As to quaternary structure, component of the RNF20/40 complex (also known as BRE1 complex) probably composed of 2 copies of RNF20/BRE1A and 2 copies of RNF40/BRE1B. Interacts with UBE2E1/UBCH6. Interacts with p53/TP53 and WAC. Interacts with PAF1; the interaction mediates the association of the PAF1 and RNF20/40 complexes which is a prerequsite for recruitment of UBE2A/B. Interacts with isoform 1 and isoform 2 of PA2G4. Interacts with FBXL19. In terms of assembly, (Microbial infection) Interacts with human herpesvirus 8 (KSHV) protein RTA/ORF50; this interaction targets the SMC5-SMC6 complex for proteasomal degradation. Expressed in the normal brain and also in malignant gliomas (at protein level).

The protein localises to the nucleus. It carries out the reaction S-ubiquitinyl-[E2 ubiquitin-conjugating enzyme]-L-cysteine + [acceptor protein]-L-lysine = [E2 ubiquitin-conjugating enzyme]-L-cysteine + N(6)-ubiquitinyl-[acceptor protein]-L-lysine.. It participates in protein modification; protein ubiquitination. Functionally, component of the RNF20/40 E3 ubiquitin-protein ligase complex that mediates monoubiquitination of 'Lys-120' of histone H2B (H2BK120ub1). H2BK120ub1 gives a specific tag for epigenetic transcriptional activation and is also prerequisite for histone H3 'Lys-4' and 'Lys-79' methylation (H3K4me and H3K79me, respectively). It thereby plays a central role inb histone code and gene regulation. The RNF20/40 complex forms a H2B ubiquitin ligase complex in cooperation with the E2 enzyme UBE2A or UBE2B; reports about the cooperation with UBE2E1/UBCH are contradictory. Required for transcriptional activation of Hox genes. Recruited to the MDM2 promoter, probably by being recruited by p53/TP53, and thereby acts as a transcriptional coactivator. Mediates the polyubiquitination of isoform 2 of PA2G4 in cancer cells leading to its proteasome-mediated degradation. Its function is as follows. (Microbial infection) Promotes the human herpesvirus 8 (KSHV) lytic cycle by inducing the expression of lytic viral genes including the latency switch gene RTA/ORF50. This chain is E3 ubiquitin-protein ligase BRE1A (RNF20), found in Homo sapiens (Human).